Reading from the N-terminus, the 338-residue chain is S-adenosylmethionine:tRNA ribosyltransferase-isomerase (338 aa).

This sequence belongs to the QueA family. Monomer.

The protein localises to the cytoplasm. It carries out the reaction 7-aminomethyl-7-carbaguanosine(34) in tRNA + S-adenosyl-L-methionine = epoxyqueuosine(34) in tRNA + adenine + L-methionine + 2 H(+). Its pathway is tRNA modification; tRNA-queuosine biosynthesis. Its function is as follows. Transfers and isomerizes the ribose moiety from AdoMet to the 7-aminomethyl group of 7-deazaguanine (preQ1-tRNA) to give epoxyqueuosine (oQ-tRNA). The polypeptide is S-adenosylmethionine:tRNA ribosyltransferase-isomerase (Francisella tularensis subsp. mediasiatica (strain FSC147)).